We begin with the raw amino-acid sequence, 1331 residues long: ABC multidrug transporter MDR2 (1331 aa).

Composition is skewed to basic and acidic residues over residues 1–20 (MVEV…KQEN) and 31–41 (SDKEKVAKKGN). A disordered region spans residues 1–51 (MVEVSEKPNTQDDGVSKQENRNPASSSSSTSDKEKVAKKGNSDATKSSTPE). 4 consecutive transmembrane segments (helical) span residues 93–113 (MIFL…LPLF), 147–167 (YFVY…VGFI), 219–239 (KVGL…IGYV), and 242–262 (WKLA…MGGI). Residues 97–387 (AIVSLASIAA…VAPNTQAFAS (291 aa)) form the ABC transmembrane type-1 1 domain. Asparagine 293 carries N-linked (GlcNAc...) asparagine glycosylation. Transmembrane regions (helical) follow at residues 325 to 345 (LGIM…LGFW) and 358 to 378 (LSAI…IGNV). An ABC transporter 1 domain is found at 422-667 (IEFRGIKHIY…KGTYLQLVEA (246 aa)). 457–464 (GPSGSGKS) is a binding site for ATP. N-linked (GlcNAc...) asparagine glycosylation is found at asparagine 529 and asparagine 737. 2 helical membrane passes run 762–782 (LCGF…SVFF) and 810–830 (FLML…IFAI). In terms of domain architecture, ABC transmembrane type-1 2 spans 764-1051 (GFFFAVLSGA…VFSFSPDMGK (288 aa)). A glycan (N-linked (GlcNAc...) asparagine) is linked at asparagine 860. The next 4 helical transmembrane spans lie at 884–904 (LGTI…ALAF), 910–930 (LVCI…FWIL), 995–1015 (ASQS…GGLL), and 1025–1045 (FFLC…VFSF). The region spanning 1086-1324 (IEFRDVHFRY…KGRYYELVHM (239 aa)) is the ABC transporter 2 domain. Asparagine 1108 carries N-linked (GlcNAc...) asparagine glycosylation. 1121–1128 (GPSGCGKS) contributes to the ATP binding site.

Belongs to the ABC transporter superfamily. ABCB family. Multidrug resistance exporter (TC 3.A.1.201) subfamily.

Its subcellular location is the cell membrane. The enzyme catalyses itraconazole(in) + ATP + H2O = itraconazole(out) + ADP + phosphate + H(+). Pleiotropic ABC efflux transporter that may be involved in the modulation susceptibility to a wide range of unrelated cytotoxic compounds. The protein is ABC multidrug transporter MDR2 of Trichophyton equinum (strain ATCC MYA-4606 / CBS 127.97) (Horse ringworm fungus).